Consider the following 101-residue polypeptide: Interleukin-8 (101 aa).

Residues 1–22 form the signal peptide; it reads MTSKLAIALLAAFLLSAALCKA. R27 is modified (citrulline). 2 disulfide bridges follow: C34–C61 and C36–C77.

This sequence belongs to the intercrine alpha (chemokine CxC) family. As to quaternary structure, homodimer. In terms of processing, citrullination at Arg-27 prevents proteolysis, and dampens tissue inflammation, it also enhances leukocytosis, possibly through impaired chemokine clearance from the blood circulation.

The protein localises to the secreted. In terms of biological role, chemotactic factor that mediates inflammatory response by attracting neutrophils, basophils, and T-cells to clear pathogens and protect the host from infection. Also plays an important role in neutrophil activation. Released in response to an inflammatory stimulus, exerts its effect by binding to the G-protein-coupled receptors CXCR1 and CXCR2, primarily found in neutrophils, monocytes and endothelial cells. G-protein heterotrimer (alpha, beta, gamma subunits) constitutively binds to CXCR1/CXCR2 receptor and activation by IL8 leads to beta and gamma subunits release from Galpha (GNAI2 in neutrophils) and activation of several downstream signaling pathways including PI3K and MAPK pathways. The chain is Interleukin-8 (CXCL8) from Tursiops truncatus (Atlantic bottle-nosed dolphin).